The chain runs to 748 residues: ATP-dependent RNA helicase DRS1 (748 aa).

Disordered stretches follow at residues 1–72 (MAVK…PEFQ) and 111–211 (RKGG…EDTK). The segment covering 18–32 (DSEEDVPDLDASDDE) has biased composition (acidic residues). Positions 38–52 (VKSSKTKNKSKKKAK) are enriched in basic residues. The span at 58–67 (HLDEDVHEDL) shows a compositional bias: basic and acidic residues. Acidic residues-rich tracts occupy residues 124 to 153 (DAEESLSEESEEEPEEGDEPGESDDEDELA), 168 to 185 (ENEEDEEDEEEEDDDEDD), and 202 to 211 (EDEDIEEDTK). The Q motif motif lies at 233-261 (KTFNSLSLSRPVLKGLGSLGYTSPSPIQS). In terms of domain architecture, Helicase ATP-binding spans 264 to 439 (IPIALLGKDI…SLSLKKPVRI (176 aa)). An ATP-binding site is contributed by 277 to 284 (AVTGSGKT). Residues 387-390 (DEAD) carry the DEAD box motif. The Helicase C-terminal domain maps to 468 to 628 (LLYQLIRKLD…TQVEQVNSLI (161 aa)). Residues 632 to 667 (GDVVEEIIEEEKQEKEILRAEMELRKGENMLKHKEE) adopt a coiled-coil conformation. Positions 687 to 748 (KMLQVLAKNK…YGKKGKKGKK (62 aa)) are disordered. Over residues 694–705 (KNKKPINSKKRK) the composition is skewed to basic residues. Over residues 720–732 (TQKDRVEYQERQY) the composition is skewed to basic and acidic residues.

The protein belongs to the DEAD box helicase family. DDX27/DRS1 subfamily. In terms of assembly, associates with pre-ribosomal particles.

The protein localises to the nucleus. It is found in the nucleolus. The catalysed reaction is ATP + H2O = ADP + phosphate + H(+). ATP-binding RNA helicase involved in ribosome assembly. The chain is ATP-dependent RNA helicase DRS1 (DRS1) from Kluyveromyces lactis (strain ATCC 8585 / CBS 2359 / DSM 70799 / NBRC 1267 / NRRL Y-1140 / WM37) (Yeast).